The sequence spans 224 residues: MAKKRTSTIMGIDEAGRGPVIGPLVVCGIIVEEKDLPAIEAMGLKDSKKLSAKKREEFAAALKNKYKYELSVLPPQEIDARFESEDNLNRLEVNCFAGLIRSAKPTIAYLDACDVNAERFGINIKKCLDFELEIVSAHEADSKYPIVSAASIIAKVHRDSLIREISEKMGEDVGSGYPADPVTISFLKNYYMKHKCLPDCARKSWKTSNAVIADCLQARLFQFE.

The 211-residue stretch at 7 to 217 (STIMGIDEAG…SNAVIADCLQ (211 aa)) folds into the RNase H type-2 domain. A divalent metal cation-binding residues include Asp-13, Glu-14, and Asp-111.

This sequence belongs to the RNase HII family. Requires Mn(2+) as cofactor. It depends on Mg(2+) as a cofactor.

It localises to the cytoplasm. It catalyses the reaction Endonucleolytic cleavage to 5'-phosphomonoester.. Functionally, endonuclease that specifically degrades the RNA of RNA-DNA hybrids. This is Ribonuclease HII from Methanocella arvoryzae (strain DSM 22066 / NBRC 105507 / MRE50).